Reading from the N-terminus, the 224-residue chain is Thiamine-phosphate synthase (224 aa).

4-amino-2-methyl-5-(diphosphooxymethyl)pyrimidine-binding positions include 44–48 (QFREK) and N79. Mg(2+)-binding residues include D80 and D99. Residue S117 participates in 4-amino-2-methyl-5-(diphosphooxymethyl)pyrimidine binding. 143–145 (TST) is a 2-[(2R,5Z)-2-carboxy-4-methylthiazol-5(2H)-ylidene]ethyl phosphate binding site. K146 contributes to the 4-amino-2-methyl-5-(diphosphooxymethyl)pyrimidine binding site. 2-[(2R,5Z)-2-carboxy-4-methylthiazol-5(2H)-ylidene]ethyl phosphate is bound by residues G175 and 195 to 196 (IS).

This sequence belongs to the thiamine-phosphate synthase family. Mg(2+) is required as a cofactor.

The enzyme catalyses 2-[(2R,5Z)-2-carboxy-4-methylthiazol-5(2H)-ylidene]ethyl phosphate + 4-amino-2-methyl-5-(diphosphooxymethyl)pyrimidine + 2 H(+) = thiamine phosphate + CO2 + diphosphate. It carries out the reaction 2-(2-carboxy-4-methylthiazol-5-yl)ethyl phosphate + 4-amino-2-methyl-5-(diphosphooxymethyl)pyrimidine + 2 H(+) = thiamine phosphate + CO2 + diphosphate. The catalysed reaction is 4-methyl-5-(2-phosphooxyethyl)-thiazole + 4-amino-2-methyl-5-(diphosphooxymethyl)pyrimidine + H(+) = thiamine phosphate + diphosphate. Its pathway is cofactor biosynthesis; thiamine diphosphate biosynthesis; thiamine phosphate from 4-amino-2-methyl-5-diphosphomethylpyrimidine and 4-methyl-5-(2-phosphoethyl)-thiazole: step 1/1. In terms of biological role, condenses 4-methyl-5-(beta-hydroxyethyl)thiazole monophosphate (THZ-P) and 2-methyl-4-amino-5-hydroxymethyl pyrimidine pyrophosphate (HMP-PP) to form thiamine monophosphate (TMP). In Bacillus cereus (strain ATCC 10987 / NRS 248), this protein is Thiamine-phosphate synthase.